An 889-amino-acid polypeptide reads, in one-letter code: Extended synaptotagmin-3 (889 aa).

The interval 1–65 is disordered; the sequence is MAQGDPGGQT…GPRDPGQGGA (65 aa). Topologically, residues 1 to 66 are cytoplasmic; the sequence is MAQGDPGGQT…PRDPGQGGAG (66 aa). Composition is skewed to basic and acidic residues over residues 17 to 28 and 41 to 58; these read TDKKPDEPKATE and PGGE…KGPR. The next 2 membrane-spanning stretches (helical) occupy residues 67–91 and 92–112; these read EALA…FPVY and LCGR…LWMF. The Cytoplasmic segment spans residues 113–889; it reads WTRNKKFKLA…ELTPTGLPTS (777 aa). In terms of domain architecture, SMP-LTD spans 155–333; the sequence is DVERVEWLNK…LPNRFTVPLS (179 aa). C2 domains lie at 331-452 and 468-618; these read PLSS…DEWF and WLSL…STIK. Positions 363, 364, 376, 423, 424, 425, 427, 429, and 430 each coordinate Ca(2+). The interval 649–724 is disordered; sequence SIKRAQSQQH…GAVPESHTPS (76 aa). Over residues 658-671 the composition is skewed to basic residues; that stretch reads HKSHGKSHQAHHQA. Low complexity-rich tracts occupy residues 672-682 and 691-714; these read HQTQQNHTVQQ and ISTT…PNST. One can recognise a C2 3 domain in the interval 757–879; that stretch reads MTGEVEVSVR…DLVKGFTKWF (123 aa). Positions 804–811 are required for phosphatidylinositol 4,5-bisphosphate-dependent location at the cell membrane; the sequence is RKWSGRKK.

It belongs to the extended synaptotagmin family.

It localises to the cell membrane. Its subcellular location is the endoplasmic reticulum membrane. Its function is as follows. Tethers the endoplasmic reticulum to the cell membrane and promotes the formation of appositions between the endoplasmic reticulum and the cell membrane. Binds glycerophospholipids in a barrel-like domain and may play a role in cellular lipid transport. This is Extended synaptotagmin-3 (esyt3) from Xenopus tropicalis (Western clawed frog).